We begin with the raw amino-acid sequence, 296 residues long: Myeloid differentiation primary response protein MyD88 (296 aa).

Residues 54–109 (MDFEYLEIRQLETQADPTGRLLDAWQGRPGASVGRLLELLTKLGRDDVLLELGPSI) enclose the Death domain. The intermediate domain stretch occupies residues 110–155 (EEDCQKYILKQQQEEAEKPLQVAAVDSSVPRTAELAGITTLDDPLG). A TIR domain is found at 159-293 (ERFDAFICYC…WFWTRLAKAL (135 aa)). S244 bears the Phosphoserine mark.

Homodimer. Also forms heterodimers with TIRAP. Binds to TLR2, TLR5, IRAK1, IRAK2 and IRAK4 via their respective TIR domains. Interacts with IL18R1. Interacts with BMX, IL1RL1, IKBKE and IRF7. Interacts with LRRFIP1 and LRRFIP2; this interaction positively regulates Toll-like receptor (TLR) signaling in response to agonist. Interacts with FLII. LRRFIP1 and LRRFIP2 compete with FLII for MYD88-binding. Interacts with IRF1. Upon IL1B treatment, forms a complex with PELI1, IRAK1, IRAK4 and TRAF6; this complex recruits MAP3K7/TAK1, TAB1 and TAB2 to mediate NF-kappa-B activation. Direct binding of SMAD6 to PELI1 prevents the complex formation and hence negatively regulates IL1R-TLR signaling and eventually NF-kappa-B-mediated gene expression. May interact with PIK3AP1. Interacts (via TIR domain) with DHX9 (via H2A and OB-fold regions); this interaction is direct. Interacts with OTUD4 deubiquitinase; the interaction is direct. Interacts with TLR4. In terms of assembly, (Microbial infection) In case of infection, interacts with uropathogenic E.coli protein TcpC; suppressing Toll-like receptor (TLR)-mediated cytokine production. As to quaternary structure, (Microbial infection) In case of infection, interacts with uropathogenic E.faecalis protein TcpF; suppressing Toll-like receptor (TLR)-mediated cytokine production. (Microbial infection) In case of infection, interacts with B.melitensis protein TcpB. In terms of assembly, (Microbial infection) Interacts with human metapneumovirus protein M2-2; this interaction prevents MYD88-mediated cytokine secretion. Ubiquitinated; undergoes 'Lys-63'-linked polyubiquitination. OTUD4 specifically hydrolyzes 'Lys-63'-linked polyubiquitinated MYD88. Deubiquitinated by USP3 that cleaves 'Lys-63'-linked ubiquitin chains leading to inhibition of MYD88-induced NF-kappa-B signaling. Post-translationally, (Microbial infection) Ubiquitinated by human herpesvirus 8 (KSHV) protein RTA/ORF50, leading to proteasomal degradation ans suppression of TLR4 signaling pathway. Ubiquitous.

Its subcellular location is the cytoplasm. The protein resides in the nucleus. Functionally, adapter protein involved in the Toll-like receptor and IL-1 receptor signaling pathway in the innate immune response. Acts via IRAK1, IRAK2, IRF7 and TRAF6, leading to NF-kappa-B activation, cytokine secretion and the inflammatory response. Increases IL-8 transcription. Involved in IL-18-mediated signaling pathway. Activates IRF1 resulting in its rapid migration into the nucleus to mediate an efficient induction of IFN-beta, NOS2/INOS, and IL12A genes. Upon TLR8 activation by GU-rich single-stranded RNA (GU-rich RNA) derived from viruses such as SARS-CoV-2, SARS-CoV and HIV-1, induces IL1B release through NLRP3 inflammasome activation. MyD88-mediated signaling in intestinal epithelial cells is crucial for maintenance of gut homeostasis and controls the expression of the antimicrobial lectin REG3G in the small intestine. This is Myeloid differentiation primary response protein MyD88 from Homo sapiens (Human).